Reading from the N-terminus, the 209-residue chain is Small ribosomal subunit protein uS4 (209 aa).

The disordered stretch occupies residues 23–46 (SRNPLLKKPHPPGQHGMQRKKKSD). Residues 93–156 (CRLDNMVYRM…RKLQSVQESL (64 aa)) form the S4 RNA-binding domain.

Belongs to the universal ribosomal protein uS4 family. In terms of assembly, part of the 30S ribosomal subunit. Contacts protein S5. The interaction surface between S4 and S5 is involved in control of translational fidelity.

Functionally, one of the primary rRNA binding proteins, it binds directly to 16S rRNA where it nucleates assembly of the body of the 30S subunit. With S5 and S12 plays an important role in translational accuracy. The chain is Small ribosomal subunit protein uS4 from Chlamydia caviae (strain ATCC VR-813 / DSM 19441 / 03DC25 / GPIC) (Chlamydophila caviae).